We begin with the raw amino-acid sequence, 118 residues long: Immunoglobulin heavy variable 4-31 (118 aa).

The first 19 residues, 1-19, serve as a signal peptide directing secretion; the sequence is MKHLWFFLLLVAAPRWVLS. Residues 20-44 form a framework-1 region; the sequence is QVQLQESGPGLVKPSQTLSLTCTVS. The 99-residue stretch at 20–118 folds into the Ig-like domain; the sequence is QVQLQESGPG…ADTAVYYCAR (99 aa). Cysteines 41 and 116 form a disulfide. The tract at residues 45 to 54 is complementarity-determining-1; sequence GGSISSGGYY. The interval 55-71 is framework-2; sequence WSWIRQHPGKGLEWIGY. A complementarity-determining-2 region spans residues 72-78; the sequence is IYYSGST. Positions 79-116 are framework-3; the sequence is YYNPSLKSLVTISVDTSKNQFSLKLSSVTAADTAVYYC. The interval 117 to 118 is complementarity-determining-3; it reads AR.

As to quaternary structure, immunoglobulins are composed of two identical heavy chains and two identical light chains; disulfide-linked.

It is found in the secreted. The protein localises to the cell membrane. V region of the variable domain of immunoglobulin heavy chains that participates in the antigen recognition. Immunoglobulins, also known as antibodies, are membrane-bound or secreted glycoproteins produced by B lymphocytes. In the recognition phase of humoral immunity, the membrane-bound immunoglobulins serve as receptors which, upon binding of a specific antigen, trigger the clonal expansion and differentiation of B lymphocytes into immunoglobulins-secreting plasma cells. Secreted immunoglobulins mediate the effector phase of humoral immunity, which results in the elimination of bound antigens. The antigen binding site is formed by the variable domain of one heavy chain, together with that of its associated light chain. Thus, each immunoglobulin has two antigen binding sites with remarkable affinity for a particular antigen. The variable domains are assembled by a process called V-(D)-J rearrangement and can then be subjected to somatic hypermutations which, after exposure to antigen and selection, allow affinity maturation for a particular antigen. This is Immunoglobulin heavy variable 4-31 from Homo sapiens (Human).